Consider the following 259-residue polypeptide: uncharacterized protein (259 aa).

Positions 1 to 22 (MKHSSKIIVFVSFLILTIFIGG) are cleaved as a signal peptide. C23 is lipidated: N-palmitoyl cysteine. C23 carries the S-diacylglycerol cysteine lipid modification.

The protein belongs to the staphylococcal tandem lipoprotein family.

Its subcellular location is the cell membrane. This is an uncharacterized protein from Staphylococcus epidermidis (strain ATCC 35984 / DSM 28319 / BCRC 17069 / CCUG 31568 / BM 3577 / RP62A).